The primary structure comprises 71 residues: Exodeoxyribonuclease 7 small subunit (71 aa).

It belongs to the XseB family. As to quaternary structure, heterooligomer composed of large and small subunits.

The protein resides in the cytoplasm. It catalyses the reaction Exonucleolytic cleavage in either 5'- to 3'- or 3'- to 5'-direction to yield nucleoside 5'-phosphates.. Functionally, bidirectionally degrades single-stranded DNA into large acid-insoluble oligonucleotides, which are then degraded further into small acid-soluble oligonucleotides. In Clostridium botulinum (strain Kyoto / Type A2), this protein is Exodeoxyribonuclease 7 small subunit.